The chain runs to 148 residues: Macrodomain Ter protein (148 aa).

It belongs to the MatP family. In terms of assembly, homodimer.

Its subcellular location is the cytoplasm. Functionally, required for spatial organization of the terminus region of the chromosome (Ter macrodomain) during the cell cycle. Prevents early segregation of duplicated Ter macrodomains during cell division. Binds specifically to matS, which is a 13 bp signature motif repeated within the Ter macrodomain. This chain is Macrodomain Ter protein, found in Haemophilus influenzae (strain ATCC 51907 / DSM 11121 / KW20 / Rd).